Here is a 230-residue protein sequence, read N- to C-terminus: 7-cyano-7-deazaguanine synthase (230 aa).

16–26 (LSGGLDSMVSG) contacts ATP. The Zn(2+) site is built by Cys-195, Cys-205, Cys-208, and Cys-211.

Belongs to the QueC family. It depends on Zn(2+) as a cofactor.

The enzyme catalyses 7-carboxy-7-deazaguanine + NH4(+) + ATP = 7-cyano-7-deazaguanine + ADP + phosphate + H2O + H(+). The protein operates within purine metabolism; 7-cyano-7-deazaguanine biosynthesis. Catalyzes the ATP-dependent conversion of 7-carboxy-7-deazaguanine (CDG) to 7-cyano-7-deazaguanine (preQ(0)). In Rhizorhabdus wittichii (strain DSM 6014 / CCUG 31198 / JCM 15750 / NBRC 105917 / EY 4224 / RW1) (Sphingomonas wittichii), this protein is 7-cyano-7-deazaguanine synthase.